Here is a 161-residue protein sequence, read N- to C-terminus: 6,7-dimethyl-8-ribityllumazine synthase (161 aa).

5-amino-6-(D-ribitylamino)uracil-binding positions include W25, 57–59 (AFE), and 80–82 (VVI). 85 to 86 (GT) contacts (2S)-2-hydroxy-3-oxobutyl phosphate. H88 serves as the catalytic Proton donor. F113 serves as a coordination point for 5-amino-6-(D-ribitylamino)uracil. (2S)-2-hydroxy-3-oxobutyl phosphate is bound at residue R127.

It belongs to the DMRL synthase family.

It carries out the reaction (2S)-2-hydroxy-3-oxobutyl phosphate + 5-amino-6-(D-ribitylamino)uracil = 6,7-dimethyl-8-(1-D-ribityl)lumazine + phosphate + 2 H2O + H(+). Its pathway is cofactor biosynthesis; riboflavin biosynthesis; riboflavin from 2-hydroxy-3-oxobutyl phosphate and 5-amino-6-(D-ribitylamino)uracil: step 1/2. In terms of biological role, catalyzes the formation of 6,7-dimethyl-8-ribityllumazine by condensation of 5-amino-6-(D-ribitylamino)uracil with 3,4-dihydroxy-2-butanone 4-phosphate. This is the penultimate step in the biosynthesis of riboflavin. This Kineococcus radiotolerans (strain ATCC BAA-149 / DSM 14245 / SRS30216) protein is 6,7-dimethyl-8-ribityllumazine synthase.